A 472-amino-acid polypeptide reads, in one-letter code: Cell division protein FtsP (472 aa).

Positions 1-32 (MSLSRRRFIQASGLALCAGGLPLQARASGAQA) form a signal peptide, tat-type signal.

Belongs to the FtsP family. In terms of processing, predicted to be exported by the Tat system. The position of the signal peptide cleavage has not been experimentally proven.

It localises to the periplasm. Cell division protein that is required for growth during stress conditions. May be involved in protecting or stabilizing the divisomal assembly under conditions of stress. This chain is Cell division protein FtsP, found in Edwardsiella tarda (strain FL6-60).